We begin with the raw amino-acid sequence, 767 residues long: 5-methyltetrahydropteroyltriglutamate--homocysteine methyltransferase (767 aa).

2 residues coordinate 5-methyltetrahydropteroyltri-L-glutamate: K19 and N126. L-homocysteine contacts are provided by residues 446 to 448 and E499; that span reads IGS. L-methionine-binding positions include 446-448 and E499; that span reads IGS. 5-methyltetrahydropteroyltri-L-glutamate-binding positions include D504, Y527, 530-531, and W576; that span reads RY. Position 614 (D614) interacts with L-homocysteine. D614 contacts L-methionine. Zn(2+)-binding residues include H657, C659, and E679. Residue H707 is the Proton donor of the active site. Residue C739 coordinates Zn(2+).

The protein belongs to the vitamin-B12 independent methionine synthase family. Zn(2+) is required as a cofactor.

The catalysed reaction is 5-methyltetrahydropteroyltri-L-glutamate + L-homocysteine = tetrahydropteroyltri-L-glutamate + L-methionine. It functions in the pathway amino-acid biosynthesis; L-methionine biosynthesis via de novo pathway; L-methionine from L-homocysteine (MetE route): step 1/1. With respect to regulation, inhibited weakly by methotrexate. Catalyzes the transfer of a methyl group from 5-methyltetrahydrofolate to homocysteine resulting in methionine formation. The protein is 5-methyltetrahydropteroyltriglutamate--homocysteine methyltransferase of Candida albicans (strain SC5314 / ATCC MYA-2876) (Yeast).